Here is a 96-residue protein sequence, read N- to C-terminus: Acylphosphatase (96 aa).

Residues C9–R96 form the Acylphosphatase-like domain. Catalysis depends on residues R24 and N42.

It belongs to the acylphosphatase family.

The catalysed reaction is an acyl phosphate + H2O = a carboxylate + phosphate + H(+). The sequence is that of Acylphosphatase (acyP) from Methanococcoides burtonii (strain DSM 6242 / NBRC 107633 / OCM 468 / ACE-M).